Here is a 252-residue protein sequence, read N- to C-terminus: Phosphate import ATP-binding protein PstB (252 aa).

Positions 5 to 247 constitute an ABC transporter domain; sequence VKIDKLNVHF…PEKKQTEDYI (243 aa). 37–44 lines the ATP pocket; it reads GPSGCGKS.

Belongs to the ABC transporter superfamily. Phosphate importer (TC 3.A.1.7) family. As to quaternary structure, the complex is composed of two ATP-binding proteins (PstB), two transmembrane proteins (PstC and PstA) and a solute-binding protein (PstS).

It localises to the cell inner membrane. It carries out the reaction phosphate(out) + ATP + H2O = ADP + 2 phosphate(in) + H(+). Part of the ABC transporter complex PstSACB involved in phosphate import. Responsible for energy coupling to the transport system. The chain is Phosphate import ATP-binding protein PstB from Geobacter metallireducens (strain ATCC 53774 / DSM 7210 / GS-15).